Consider the following 338-residue polypeptide: RNA 3'-terminal phosphate cyclase (338 aa).

ATP is bound by residues Gln103 and 283–287; that span reads YLADQ. The active-site Tele-AMP-histidine intermediate is the His308.

It belongs to the RNA 3'-terminal cyclase family. Type 1 subfamily.

It localises to the cytoplasm. It carries out the reaction a 3'-end 3'-phospho-ribonucleotide-RNA + ATP = a 3'-end 2',3'-cyclophospho-ribonucleotide-RNA + AMP + diphosphate. In terms of biological role, catalyzes the conversion of 3'-phosphate to a 2',3'-cyclic phosphodiester at the end of RNA. The mechanism of action of the enzyme occurs in 3 steps: (A) adenylation of the enzyme by ATP; (B) transfer of adenylate to an RNA-N3'P to produce RNA-N3'PP5'A; (C) and attack of the adjacent 2'-hydroxyl on the 3'-phosphorus in the diester linkage to produce the cyclic end product. The biological role of this enzyme is unknown but it is likely to function in some aspects of cellular RNA processing. The polypeptide is RNA 3'-terminal phosphate cyclase (Escherichia coli O81 (strain ED1a)).